The sequence spans 179 residues: Inosine/xanthosine triphosphatase (179 aa).

E71 contacts Mg(2+). 71–72 (EA) is a binding site for substrate.

Belongs to the YjjX NTPase family. In terms of assembly, homodimer. It depends on Mg(2+) as a cofactor. Requires Mn(2+) as cofactor.

It catalyses the reaction XTP + H2O = XDP + phosphate + H(+). The catalysed reaction is ITP + H2O = IDP + phosphate + H(+). Phosphatase that hydrolyzes non-canonical purine nucleotides such as XTP and ITP to their respective diphosphate derivatives. Probably excludes non-canonical purines from DNA/RNA precursor pool, thus preventing their incorporation into DNA/RNA and avoiding chromosomal lesions. This chain is Inosine/xanthosine triphosphatase, found in Shewanella oneidensis (strain ATCC 700550 / JCM 31522 / CIP 106686 / LMG 19005 / NCIMB 14063 / MR-1).